Here is a 570-residue protein sequence, read N- to C-terminus: Protein mom-5 (570 aa).

The first 16 residues, 1–16 (MHRHILILFLFGCLSA), serve as a signal peptide directing secretion. The Extracellular portion of the chain corresponds to 17 to 230 (DQRLSSTSIS…FDGRVRRILR (214 aa)). The FZ domain maps to 32–148 (STTRKCEHIT…FPVTDLCVGK (117 aa)). 5 disulfides stabilise this stretch: Cys-37-Cys-98, Cys-45-Cys-91, Cys-82-Cys-119, Cys-108-Cys-145, and Cys-112-Cys-136. Asn-51 carries an N-linked (GlcNAc...) asparagine glycan. Asn-149 carries N-linked (GlcNAc...) asparagine glycosylation. A helical membrane pass occupies residues 231 to 251 (IWTAAWSVACFVCSLFTLVTF). Topologically, residues 252 to 264 (LVDLSRFAYPVRP) are cytoplasmic. Residues 265–285 (ILYLAFCYLAISTVYMIGVVG) form a helical membrane-spanning segment. Residues 286–319 (EDGFACGTYGSTPTTLVTQGGENVGCSALAVVHY) lie on the Extracellular side of the membrane. A helical membrane pass occupies residues 320-340 (FFFMSSCAWWLVLCLAWFLAA). The Cytoplasmic portion of the chain corresponds to 341–348 (NLKWGAES). A helical membrane pass occupies residues 349–369 (IAALSPYFHAMCWGVPAVLSV). Topologically, residues 370–395 (TVLVTNSVDGDVFTGICSVGNLNPSA) are extracellular. Residues 396-416 (LVYFFFTPIVVSLALGAVLLV) form a helical membrane-spanning segment. Over 417 to 449 (CGIWSMIRIRSYIKLQHADVERNISKLEKLMLR) the chain is Cytoplasmic. The chain crosses the membrane as a helical span at residues 450–470 (IGAFAIMYSLPTAMNAAIMWY). Residues 471–515 (QAVNMPAWLEGWLHHRCVRLQDRELFGFTYPVDDCPMDPKVAAPE) are Extracellular-facing. The chain crosses the membrane as a helical span at residues 516-536 (IIVFLLKYVSQLVVGITCAIW). Over 537 to 570 (VVSSKTLSSYHKAYLALSSRSPTVPAHVDQVNMR) the chain is Cytoplasmic.

It belongs to the G-protein coupled receptor Fz/Smo family.

The protein localises to the cell membrane. Its subcellular location is the early endosome. Functionally, receptor for Wnt proteins. Most frizzled receptors are coupled to the beta-catenin canonical signaling pathway, which leads to the activation of disheveled proteins, inhibition of gsk-3 kinase, nuclear accumulation of beta-catenin and activation of Wnt target genes. A second signaling pathway involving PKC and calcium fluxes has been seen for some family members, but it is not yet clear if it represents a distinct pathway or if it can be integrated in the canonical pathway, as pkc seems to be required for Wnt-mediated inactivation of gsk-3 kinase. Both pathways seem to involve interactions with G-proteins. Required in embryonic development for the correct positioning and orientation of the mitotic spindles and division planes in blastomere cells. During early embryonic cell divisions, directs the asymmetric positioning of transcription factors such as pop-1 and dsh-2 in daughter cells in order to determine cell fate specification. Acts redundantly with other Wnt receptors such as lin-17 to control vulval precursor cell specification and also the polarity of different cell types including distal tip cells, seam cells, AVG interneurons and P-cells and their descendants. Plays a role in the migration of cell types including distal tip cells and the QR neuroblast descendants, QR.p and QR.pa during larval development. Negatively regulates the unc-6/Netrin receptors unc-5 and unc-40 to control distal tip cell polarity and migration. Acts through ced-5/DOCK180 and ced-10/Rac to control both distal tip cell migration and the phagocytic clearance of apoptotic cell corpses. Furthermore, it is also required for the migration and axon guidance of the different neuronal cell types including CAN, ALM, HSN and the two mechanosensory neurons AVM and PVM. Mediates Wnt receptor cfz-2 in directing ALM migration, but may also act redundantly with the Wnt receptors cfz-2 and mig-1 to direct the migration of other neuronal cell types including CAN and HSN. Mediates Wnt ligand egl-20 in the control of the anterior-posterior axon guidance of AVM and PVM neurons. This Caenorhabditis elegans protein is Protein mom-5.